A 529-amino-acid chain; its full sequence is Non-reducing end alpha-L-arabinofuranosidase BoGH43B (529 aa).

An N-terminal signal peptide occupies residues 1–23 (MMKNSCRLLLILIGLWMANVSLA). Asp38 (proton acceptor) is an active-site residue. The active-site Proton donor is the Glu198.

The protein belongs to the glycosyl hydrolase 43 family.

The protein resides in the periplasm. The enzyme catalyses Hydrolysis of terminal non-reducing alpha-L-arabinofuranoside residues in alpha-L-arabinosides.. Its pathway is glucan metabolism; xyloglucan degradation. Its function is as follows. Alpha-L-arabinofuranosidase involved in xyloglucan degradation by mediating the cleavage of terminal non-reducing alpha-L-arabinofuranoside residues in xyloglucan branches, converting the 'S' units to 'X' units. This chain is Non-reducing end alpha-L-arabinofuranosidase BoGH43B, found in Bacteroides ovatus (strain ATCC 8483 / DSM 1896 / JCM 5824 / BCRC 10623 / CCUG 4943 / NCTC 11153).